Consider the following 228-residue polypeptide: Urease accessory protein UreF (228 aa).

This sequence belongs to the UreF family. In terms of assembly, ureD, UreF and UreG form a complex that acts as a GTP-hydrolysis-dependent molecular chaperone, activating the urease apoprotein by helping to assemble the nickel containing metallocenter of UreC. The UreE protein probably delivers the nickel.

It localises to the cytoplasm. Required for maturation of urease via the functional incorporation of the urease nickel metallocenter. The chain is Urease accessory protein UreF from Prochlorococcus marinus subsp. pastoris (strain CCMP1986 / NIES-2087 / MED4).